Consider the following 375-residue polypeptide: Queuine tRNA-ribosyltransferase (375 aa).

Aspartate 89 functions as the Proton acceptor in the catalytic mechanism. Substrate is bound by residues 89–93 (DSGGF), aspartate 143, glutamine 187, and glycine 214. Residues 245 to 251 (GVGKPED) are RNA binding. Aspartate 264 acts as the Nucleophile in catalysis. The segment at 269–273 (TRNAR) is RNA binding; important for wobble base 34 recognition. Zn(2+) is bound by residues cysteine 302, cysteine 304, cysteine 307, and histidine 333.

It belongs to the queuine tRNA-ribosyltransferase family. Homodimer. Within each dimer, one monomer is responsible for RNA recognition and catalysis, while the other monomer binds to the replacement base PreQ1. The cofactor is Zn(2+).

The catalysed reaction is 7-aminomethyl-7-carbaguanine + guanosine(34) in tRNA = 7-aminomethyl-7-carbaguanosine(34) in tRNA + guanine. The protein operates within tRNA modification; tRNA-queuosine biosynthesis. In terms of biological role, catalyzes the base-exchange of a guanine (G) residue with the queuine precursor 7-aminomethyl-7-deazaguanine (PreQ1) at position 34 (anticodon wobble position) in tRNAs with GU(N) anticodons (tRNA-Asp, -Asn, -His and -Tyr). Catalysis occurs through a double-displacement mechanism. The nucleophile active site attacks the C1' of nucleotide 34 to detach the guanine base from the RNA, forming a covalent enzyme-RNA intermediate. The proton acceptor active site deprotonates the incoming PreQ1, allowing a nucleophilic attack on the C1' of the ribose to form the product. After dissociation, two additional enzymatic reactions on the tRNA convert PreQ1 to queuine (Q), resulting in the hypermodified nucleoside queuosine (7-(((4,5-cis-dihydroxy-2-cyclopenten-1-yl)amino)methyl)-7-deazaguanosine). In Aliivibrio fischeri (strain ATCC 700601 / ES114) (Vibrio fischeri), this protein is Queuine tRNA-ribosyltransferase.